We begin with the raw amino-acid sequence, 79 residues long: Antimicrobial peptide ToAP2 (79 aa).

Positions 1 to 23 (MQFKKQLLVIFFAYFLVVNESEA) are cleaved as a signal peptide. Residues 50–79 (SLMKRELKNLYDPYQRSVEMERLLKELPLY) constitute a propeptide that is removed on maturation.

This sequence belongs to the non-disulfide-bridged peptide (NDBP) superfamily. Medium-length antimicrobial peptide (group 3) family. In terms of tissue distribution, expressed by the venom gland.

The protein localises to the secreted. It localises to the target cell membrane. Its function is as follows. Antimicrobial peptide. Shows antibacterial activity against all M.massiliense bacterial strains tested. Has antifungal activity against Candida spp. and two Cryptococcus neoformans strains with MICs values ranging from 6.25 to 200 uM. Also shows an inhibitory activity on C.albicans biofilms at high concentrations. Exhibits chemotactic activity for monocytes, neutrophils, and eosinophils. Shows low cytotoxic activity and has weak hemolytic activity on human erythrocytes. In vivo, treatment of infected mice with M.massiliense reduces the bacterial load in the liver, lung, and spleen. May act by disrupting the integrity of the bacterial cell membrane. In Tityus obscurus (Amazonian scorpion), this protein is Antimicrobial peptide ToAP2.